The sequence spans 1030 residues: Germ cell nuclear acidic protein (1030 aa).

Disordered stretches follow at residues 1–59 (MADH…TEDT), 196–245 (EWNG…TQLA), 266–361 (KRLA…VSSI), 375–433 (TMES…EQFL), 457–594 (LKRS…DLTY), and 699–764 (KLGI…PVAS). Over residues 20–33 (APKDHPEKRNDQKT) the composition is skewed to basic and acidic residues. 2 stretches are compositionally biased toward polar residues: residues 298–316 (EPNT…TIHN) and 329–349 (ETSS…STSG). The segment covering 505-516 (LRTNQTPLNSTR) has biased composition (polar residues). Basic and acidic residues-rich tracts occupy residues 541–553 (NHID…KLID) and 578–594 (DSDK…DLTY). The span at 720-748 (TPKTAPPKGTAPPKTSAPPKVSTPPKSTK) shows a compositional bias: low complexity.

This sequence belongs to the serine-aspartate repeat-containing protein (SDr) family.

Its subcellular location is the cytoplasm. The protein resides in the chromosome. Functionally, may play a role in DNA-protein cross-links (DPCs) clearance, ensuring the genomic stability by protecting germ cells and early embryos from various sources of damage. Limits replication stress and DNA double-strand breaks. The chain is Germ cell nuclear acidic protein from Drosophila melanogaster (Fruit fly).